The primary structure comprises 273 residues: Rhamnulose-1-phosphate aldolase (273 aa).

Glu-117 is an active-site residue. His-140, His-142, and His-211 together coordinate Zn(2+).

Belongs to the aldolase class II family. RhaD subfamily. Zn(2+) is required as a cofactor.

It is found in the cytoplasm. The catalysed reaction is L-rhamnulose 1-phosphate = (S)-lactaldehyde + dihydroxyacetone phosphate. It participates in carbohydrate degradation; L-rhamnose degradation; glycerone phosphate from L-rhamnose: step 3/3. Its function is as follows. Catalyzes the reversible cleavage of L-rhamnulose-1-phosphate to dihydroxyacetone phosphate (DHAP) and L-lactaldehyde. The chain is Rhamnulose-1-phosphate aldolase from Listeria monocytogenes serotype 4b (strain F2365).